We begin with the raw amino-acid sequence, 178 residues long: Cytochrome b6-f complex iron-sulfur subunit (178 aa).

The helical transmembrane segment at L20–I42 threads the bilayer. The Rieske domain occupies A65–V161. [2Fe-2S] cluster contacts are provided by C107, H109, C125, and H128. The cysteines at positions 112 and 127 are disulfide-linked.

Belongs to the Rieske iron-sulfur protein family. The 4 large subunits of the cytochrome b6-f complex are cytochrome b6, subunit IV (17 kDa polypeptide, PetD), cytochrome f and the Rieske protein, while the 4 small subunits are PetG, PetL, PetM and PetN. The complex functions as a dimer. [2Fe-2S] cluster serves as cofactor.

Its subcellular location is the cellular thylakoid membrane. It catalyses the reaction 2 oxidized [plastocyanin] + a plastoquinol + 2 H(+)(in) = 2 reduced [plastocyanin] + a plastoquinone + 4 H(+)(out). Functionally, component of the cytochrome b6-f complex, which mediates electron transfer between photosystem II (PSII) and photosystem I (PSI), cyclic electron flow around PSI, and state transitions. The chain is Cytochrome b6-f complex iron-sulfur subunit from Synechococcus sp. (strain RCC307).